The sequence spans 484 residues: Iroquois-class homeodomain protein IRX-5 (484 aa).

Residues 112-174 (DPAYRKNATR…NARRRLKKEN (63 aa)) constitute a DNA-binding region (homeobox; TALE-type). Disordered stretches follow at residues 176 to 393 (MTWT…QCPF) and 424 to 443 (GHPGPGPSPTAGPGSHFNGL). The span at 185 to 202 (EDEEEEENIDLEKNDEDE) shows a compositional bias: acidic residues. Basic and acidic residues-rich tracts occupy residues 203–212 (PQKPEDKGDL) and 249–265 (SDFKESSSEGRHDELPR). A Phosphoserine modification is found at S273. Residues 318–328 (SPPPPPPPPPA) show a composition bias toward pro residues. Over residues 375-389 (SRASPAPAPARSPSA) the composition is skewed to low complexity. Residue S465 is modified to Phosphoserine.

The protein belongs to the TALE/IRO homeobox family. As to expression, not expressed in the developing metanephric kidney or adult kidney.

The protein localises to the nucleus. In terms of biological role, establishes the cardiac repolarization gradient by its repressive actions on the KCND2 potassium-channel gene. Required for retinal cone bipolar cell differentiation. May regulate contrast adaptation in the retina and control specific aspects of visual function in circuits of the mammalian retina. Involved in craniofacial and gonadal development. Modulates the migration of progenitor cell populations in branchial arches and gonads by repressing CXCL12. In Mus musculus (Mouse), this protein is Iroquois-class homeodomain protein IRX-5 (Irx5).